The chain runs to 190 residues: Probable RNA-binding protein 18 (190 aa).

An RRM domain is found at H25 to A106.

The sequence is that of Probable RNA-binding protein 18 (rbm18) from Xenopus laevis (African clawed frog).